The primary structure comprises 1486 residues: Chromosome partition protein MukB (1486 aa).

Residue 34 to 41 (GGNGAGKS) coordinates ATP. Coiled coils occupy residues 326–418 (LEAD…QYNQ), 444–480 (LETF…QAYQ), and 509–603 (RHLA…RAPV). Residues 666–783 (PGGSEDQRLN…EVPLFGRAAR (118 aa)) form a flexible hinge region. Coiled-coil stretches lie at residues 835-923 (EAEI…AKLE), 977-1115 (EMLS…TAKA), and 1209-1266 (VEAI…QNVS).

Belongs to the SMC family. MukB subfamily. Homodimerization via its hinge domain. Binds to DNA via its C-terminal region. Interacts, and probably forms a ternary complex, with MukE and MukF via its C-terminal region. The complex formation is stimulated by calcium or magnesium. Interacts with tubulin-related protein FtsZ.

It localises to the cytoplasm. The protein localises to the nucleoid. Its function is as follows. Plays a central role in chromosome condensation, segregation and cell cycle progression. Functions as a homodimer, which is essential for chromosome partition. Involved in negative DNA supercoiling in vivo, and by this means organize and compact chromosomes. May achieve or facilitate chromosome segregation by condensation DNA from both sides of a centrally located replisome during cell division. In Escherichia coli (strain SMS-3-5 / SECEC), this protein is Chromosome partition protein MukB.